The sequence spans 314 residues: MQREKVAVIIGPTAVGKTKLSIDLAKALNGEIISGDSMQIYRTMDIGTAKVTKEEMDGIPHYMVDIKNPEESFSVAEFQERVRKHIREITERGKLPIIVGGTGLYIQSVLFDYQFTDDAGDAIYREQMEKLALERGVEYVHKKLQEVDPESAERIHANNVRRVIRALEIFHTSGEKMSDQLEKQENELLYDVSLIGLTMDREMLYDRINLRVDIMMDQGLLEEVEGLYNRGIRDCQSIQAIGYKEIYDYFEDRVSLEEAVSQLKTNSRRYAKRQLTWFRNKMDVTWFDVTDGEKTSEILRYIEGKLQLKSNNSK.

11–18 (GPTAVGKT) serves as a coordination point for ATP. 13–18 (TAVGKT) lines the substrate pocket. An interaction with substrate tRNA region spans residues 36-39 (DSMQ).

This sequence belongs to the IPP transferase family. As to quaternary structure, monomer. Requires Mg(2+) as cofactor.

It carries out the reaction adenosine(37) in tRNA + dimethylallyl diphosphate = N(6)-dimethylallyladenosine(37) in tRNA + diphosphate. In terms of biological role, catalyzes the transfer of a dimethylallyl group onto the adenine at position 37 in tRNAs that read codons beginning with uridine, leading to the formation of N6-(dimethylallyl)adenosine (i(6)A). The polypeptide is tRNA dimethylallyltransferase (Bacillus anthracis).